A 258-amino-acid chain; its full sequence is Thiazole synthase (258 aa).

K98 acts as the Schiff-base intermediate with DXP in catalysis. 1-deoxy-D-xylulose 5-phosphate is bound by residues G159, 185–186 (AG), and 207–208 (NT).

Belongs to the ThiG family. Homotetramer. Forms heterodimers with either ThiH or ThiS.

The protein localises to the cytoplasm. It carries out the reaction [ThiS sulfur-carrier protein]-C-terminal-Gly-aminoethanethioate + 2-iminoacetate + 1-deoxy-D-xylulose 5-phosphate = [ThiS sulfur-carrier protein]-C-terminal Gly-Gly + 2-[(2R,5Z)-2-carboxy-4-methylthiazol-5(2H)-ylidene]ethyl phosphate + 2 H2O + H(+). Its pathway is cofactor biosynthesis; thiamine diphosphate biosynthesis. Its function is as follows. Catalyzes the rearrangement of 1-deoxy-D-xylulose 5-phosphate (DXP) to produce the thiazole phosphate moiety of thiamine. Sulfur is provided by the thiocarboxylate moiety of the carrier protein ThiS. In vitro, sulfur can be provided by H(2)S. The sequence is that of Thiazole synthase from Cytophaga hutchinsonii (strain ATCC 33406 / DSM 1761 / CIP 103989 / NBRC 15051 / NCIMB 9469 / D465).